The following is a 487-amino-acid chain: DNA-dependent metalloprotease SPRTN (487 aa).

Met1 is subject to N-acetylmethionine. Residues 45–212 (LQGLFVLFND…KTCGGTYIKI (168 aa)) enclose the SprT-like domain. His111 is a Zn(2+) binding site. Glu112 is an active-site residue. Positions 115 and 130 each coordinate Zn(2+). The tract at residues 219–248 (SKKGKGKTKLRKQPVSEAENKDKPNRGEKQ) is disordered. Basic residues predominate over residues 220-230 (KKGKGKTKLRK). At Lys230 the chain carries N6-acetyllysine. Positions 236–247 (AENKDKPNRGEK) are enriched in basic and acidic residues. The SHP-box motif lies at 253–261 (FTGKGYVLG). Ser267 carries the post-translational modification Phosphoserine. A compositionally biased stretch (polar residues) spans 280–289 (SQEPLSQDHS). The interval 280–317 (SQEPLSQDHSANALRPHSKTEVKFEQNGPSKKTSVASP) is disordered. Residue Lys302 forms a Glycyl lysine isopeptide (Lys-Gly) (interchain with G-Cter in SUMO2) linkage. The span at 306 to 317 (NGPSKKTSVASP) shows a compositional bias: polar residues. The PIP-box signature appears at 324–331 (QNVLSNYF). Residue Lys340 forms a Glycyl lysine isopeptide (Lys-Gly) (interchain with G-Cter in SUMO2); alternate linkage. Lys340 participates in a covalent cross-link: Glycyl lysine isopeptide (Lys-Gly) (interchain with G-Cter in ubiquitin); alternate. Residues 347 to 379 (GSPVKSLTVGDSTTKSVSAGSQRRVTSSRTSLR) form a disordered region. Position 373 is a phosphoserine (Ser373). Residues 401–412 (GKLPSKRPRIED) carry the Nuclear localization signal motif. Residue Lys413 forms a Glycyl lysine isopeptide (Lys-Gly) (interchain with G-Cter in ubiquitin) linkage. Glycyl lysine isopeptide (Lys-Gly) (interchain with G-Cter in SUMO2) cross-links involve residues Lys422 and Lys423. Residues 427 to 455 (QSGGGDVTSSSHPPAAAQSPSGASGQSRV) are disordered. A compositionally biased stretch (low complexity) spans 435 to 453 (SSSHPPAAAQSPSGASGQS). The UBZ4-type zinc finger occupies 455-482 (VVHCPVCQDEVSETQINEHLDWCLERDS). Cys458, Cys461, His473, and Cys477 together coordinate Zn(2+). Lys486 is covalently cross-linked (Glycyl lysine isopeptide (Lys-Gly) (interchain with G-Cter in SUMO2)).

This sequence belongs to the Spartan family. Homodimer. Interacts (VIA PIP-box) with PCNA (when ubiquitinated). Interacts (via its SHP-box) with VCP/p97. Interacts with RAD18. Interacts with KCTD13 and POLD3. The cofactor is Zn(2+). In terms of processing, autocatalytically cleaved in response to double-stranded DNA-binding: autocatalytic cleavage takes place in trans and leads to inactivation. Monoubiquitinated; monoubiquitination promotes exclusion from chromatin. Deubiquitinated by VCPIP1: deubiquitination is required for subsequent acetylation and recruitment to chromatin and DNA damage sites. Post-translationally, acetylated following deubiquitination by VCPIP1, leading to recruitment to chromatin and DNA damage sites. In terms of processing, phosphorylation by CHEK1 promotes recruitment to chromatin.

The protein localises to the nucleus. The protein resides in the chromosome. DNA-binding activates the protease activity: single-stranded DNA-binding specifically activates ability to cleave covalent DNA-protein cross-links (DPCs). In contrast, double-stranded DNA-binding specifically activates autocatalytic cleavage, and subsequent inactivation. Its function is as follows. DNA-dependent metalloendopeptidase that mediates the proteolytic cleavage of covalent DNA-protein cross-links (DPCs) during DNA synthesis, thereby playing a key role in maintaining genomic integrity. DPCs are highly toxic DNA lesions that interfere with essential chromatin transactions, such as replication and transcription, and which are induced by reactive agents, such as UV light or formaldehyde. Associates with the DNA replication machinery and specifically removes DPCs during DNA synthesis. Catalyzes proteolytic cleavage of the HMCES DNA-protein cross-link following unfolding by the BRIP1/FANCJ helicase. Acts as a pleiotropic protease for DNA-binding proteins cross-linked with DNA, such as TOP1, TOP2A, histones H3 and H4. Mediates degradation of DPCs that are not ubiquitinated, while it is not able to degrade ubiquitinated DPCs. SPRTN activation requires polymerase collision with DPCs followed by helicase bypass of DPCs. Involved in recruitment of VCP/p97 to sites of DNA damage. Also acts as an activator of CHEK1 during normal DNA replication by mediating proteolytic cleavage of CHEK1, thereby promoting CHEK1 removal from chromatin and subsequent activation. Does not activate CHEK1 in response to DNA damage. May also act as a 'reader' of ubiquitinated PCNA: recruited to sites of UV damage and interacts with ubiquitinated PCNA and RAD18, the E3 ubiquitin ligase that monoubiquitinates PCNA. Facilitates chromatin association of RAD18 and is required for efficient PCNA monoubiquitination, promoting a feed-forward loop to enhance PCNA ubiquitination and translesion DNA synthesis. This is DNA-dependent metalloprotease SPRTN from Bos taurus (Bovine).